A 79-amino-acid chain; its full sequence is Sulfur carrier protein TusA (79 aa).

The active-site Cysteine persulfide intermediate is Cys17.

It belongs to the sulfur carrier protein TusA family.

Its subcellular location is the cytoplasm. In terms of biological role, sulfur carrier protein which probably makes part of a sulfur-relay system. The protein is Sulfur carrier protein TusA of Haemophilus influenzae (strain 86-028NP).